A 652-amino-acid polypeptide reads, in one-letter code: Acetyl-coenzyme A synthetase (652 aa).

Residues 191–194 (RAGR), T311, and N335 contribute to the CoA site. Residues 387–389 (GEP), 411–416 (DTWWQT), D500, and R515 contribute to the ATP site. Residue S523 coordinates CoA. Position 526 (R526) interacts with ATP. 3 residues coordinate Mg(2+): V537, H539, and I542. CoA is bound at residue R584. K609 is subject to N6-acetyllysine.

It belongs to the ATP-dependent AMP-binding enzyme family. Mg(2+) is required as a cofactor. Post-translationally, acetylated. Deacetylation by the SIR2-homolog deacetylase activates the enzyme.

It catalyses the reaction acetate + ATP + CoA = acetyl-CoA + AMP + diphosphate. In terms of biological role, catalyzes the conversion of acetate into acetyl-CoA (AcCoA), an essential intermediate at the junction of anabolic and catabolic pathways. Acs undergoes a two-step reaction. In the first half reaction, Acs combines acetate with ATP to form acetyl-adenylate (AcAMP) intermediate. In the second half reaction, it can then transfer the acetyl group from AcAMP to the sulfhydryl group of CoA, forming the product AcCoA. Enables the cell to use acetate during aerobic growth to generate energy via the TCA cycle, and biosynthetic compounds via the glyoxylate shunt. Acetylates CheY, the response regulator involved in flagellar movement and chemotaxis. This chain is Acetyl-coenzyme A synthetase, found in Yersinia pestis.